The sequence spans 172 residues: MEQLRKRVVRFTNNDDDDFEPVFLNEQDQDAFVEQLRLTNNRDNRMFSIIFSFLYLLLIVPLFLYPEYWAFKLVELLSLFYCAYVMYFLPLEVGLFNPKTPNKWKFLFILNIGVTALITVLGWSQHTSFFYAFLNIRTLVCGITIFTEIARYSMYHSTLSVEKLDEMRFAHM.

4 consecutive transmembrane segments (helical) span residues 46 to 66 (MFSIIFSFLYLLLIVPLFLYP), 76 to 96 (LLSLFYCAYVMYFLPLEVGLF), 104 to 124 (WKFLFILNIGVTALITVLGWS), and 129 to 149 (FFYAFLNIRTLVCGITIFTEI).

The protein localises to the endoplasmic reticulum membrane. This is an uncharacterized protein from Schizosaccharomyces pombe (strain 972 / ATCC 24843) (Fission yeast).